The following is a 114-amino-acid chain: DNA-directed RNA polymerase subunit omega (114 aa).

Belongs to the RNA polymerase subunit omega family. The RNAP catalytic core consists of 2 alpha, 1 beta, 1 beta' and 1 omega subunit. When a sigma factor is associated with the core the holoenzyme is formed, which can initiate transcription.

It carries out the reaction RNA(n) + a ribonucleoside 5'-triphosphate = RNA(n+1) + diphosphate. Functionally, promotes RNA polymerase assembly. Latches the N- and C-terminal regions of the beta' subunit thereby facilitating its interaction with the beta and alpha subunits. This chain is DNA-directed RNA polymerase subunit omega, found in Novosphingobium aromaticivorans (strain ATCC 700278 / DSM 12444 / CCUG 56034 / CIP 105152 / NBRC 16084 / F199).